Reading from the N-terminus, the 195-residue chain is uncharacterized protein (195 aa).

Transmembrane regions (helical) follow at residues 89-106, 111-128, 149-168, and 172-194; these read SWIS…PLLP, HLPL…VWKR, VKIS…VLLL, and LNAL…FLNI.

The protein resides in the cell membrane. This is an uncharacterized protein from Bacillus subtilis (strain 168).